The following is an 868-amino-acid chain: Leucine--tRNA ligase (868 aa).

A 'HIGH' region motif is present at residues 42 to 52 (PYPSGKLHMGH). The short motif at 627–631 (KMSKS) is the 'KMSKS' region element. Lys-630 contacts ATP.

The protein belongs to the class-I aminoacyl-tRNA synthetase family.

It localises to the cytoplasm. The enzyme catalyses tRNA(Leu) + L-leucine + ATP = L-leucyl-tRNA(Leu) + AMP + diphosphate. The chain is Leucine--tRNA ligase from Pseudomonas putida (strain ATCC 700007 / DSM 6899 / JCM 31910 / BCRC 17059 / LMG 24140 / F1).